Reading from the N-terminus, the 87-residue chain is Small ribosomal subunit protein bS20 (87 aa).

Positions 1–26 (MANIKSAKKRAVQSEKARKHNASRRS) are disordered.

It belongs to the bacterial ribosomal protein bS20 family.

Functionally, binds directly to 16S ribosomal RNA. The polypeptide is Small ribosomal subunit protein bS20 (Salmonella gallinarum (strain 287/91 / NCTC 13346)).